A 901-amino-acid chain; its full sequence is Cyanophycin synthetase (901 aa).

One can recognise an ATP-grasp domain in the interval Lys224–Phe478. Gly493 to Thr499 provides a ligand contact to ATP.

The protein in the C-terminal section; belongs to the MurCDEF family. In terms of assembly, homodimer.

It catalyses the reaction [L-4-(L-arginin-2-N-yl)aspartate](n) + L-aspartate + ATP = [L-4-(L-arginin-2-N-yl)aspartate](n)-L-aspartate + ADP + phosphate + H(+). It carries out the reaction [L-4-(L-arginin-2-N-yl)aspartate](n)-L-aspartate + L-arginine + ATP = [L-4-(L-arginin-2-N-yl)aspartate](n+1) + ADP + phosphate + H(+). In terms of biological role, catalyzes the ATP-dependent polymerization of arginine and aspartate to multi-L-arginyl-poly-L-aspartic acid (cyanophycin; a water-insoluble reserve polymer). This chain is Cyanophycin synthetase (cphA), found in Trichormus variabilis (strain ATCC 29413 / PCC 7937) (Anabaena variabilis).